The following is a 609-amino-acid chain: Copper resistance protein A (609 aa).

The tat-type signal signal peptide spans Met1 to Ala32. Cu cation is bound by residues His100, His102, His142, and His144. Repeat copies occupy residues Asp367–Met374, Asp375–Met382, Asp408–Met415, Asp419–Met426, and Asp427–Met434. The segment at Asp367 to Met434 is 5 X 8 AA tandem repeats of D-H-X-X-M-X-G-M. The Cu cation site is built by His542, His545, His547, His590, Cys591, His592, His596, and Met601.

The protein belongs to the multicopper oxidase family. CopA subfamily. Post-translationally, predicted to be exported by the Tat system. The position of the signal peptide cleavage has been experimentally proven.

It localises to the periplasm. Mediates copper resistance by sequestration of copper in the periplasm along with the copper-binding protein CopC. May have oxidase activity. In Pseudomonas syringae pv. tomato, this protein is Copper resistance protein A (copA).